The sequence spans 600 residues: NAD-dependent malic enzyme, mitochondrial (600 aa).

A mitochondrion-targeting transit peptide spans Met1 to Thr68. Position 93 (Arg93) interacts with fumarate. The active-site Proton donor is Tyr138. Arg194 is a (S)-malate binding site. Arg194 serves as a coordination point for NAD(+). Lys212 acts as the Proton acceptor in catalysis. A divalent metal cation-binding residues include Glu283, Asp284, and Asp307. NAD(+)-binding residues include Gly344 and Ala347. Residues Asn458 and Asn502 each contribute to the (S)-malate site.

Belongs to the malic enzymes family. Mg(2+) serves as cofactor. It depends on Mn(2+) as a cofactor.

It localises to the mitochondrion matrix. Its subcellular location is the cytoplasm. It is found in the cytosol. The protein localises to the nucleus. It carries out the reaction (S)-malate + NAD(+) = pyruvate + CO2 + NADH. The enzyme catalyses oxaloacetate + H(+) = pyruvate + CO2. In terms of biological role, NAD-dependent mitochondrial malic enzyme that catalyzes the oxidative decarboxylation of malate to pyruvate. This is NAD-dependent malic enzyme, mitochondrial from Cryptococcus neoformans var. grubii serotype A (strain H99 / ATCC 208821 / CBS 10515 / FGSC 9487) (Filobasidiella neoformans var. grubii).